A 31-amino-acid chain; its full sequence is Chymotrypsin (31 aa).

In terms of domain architecture, Peptidase S1 spans 1–31; that stretch reads IVGGVEAVPGVWPYQAALFIIDMYFCGGSLI.

The protein belongs to the peptidase S1 family.

The protein localises to the secreted. It localises to the extracellular space. The catalysed reaction is Preferential cleavage: Tyr-|-Xaa, Trp-|-Xaa, Phe-|-Xaa, Leu-|-Xaa.. The polypeptide is Chymotrypsin (Penaeus monodon (Giant tiger prawn)).